The sequence spans 229 residues: uncharacterized protein (229 aa).

The 228-residue stretch at 2 to 229 folds into the ABC transporter domain; that stretch reads LTLNNISKSY…LDERGDISHA (228 aa). Residue 38–45 coordinates ATP; it reads GPSGSGKS.

This sequence belongs to the ABC transporter superfamily.

This is an uncharacterized protein from Bacillus subtilis (strain 168).